Consider the following 232-residue polypeptide: Small ribosomal subunit protein uS3 (232 aa).

The KH type-2 domain occupies 39-107 (VRQYLTKELK…PAQINIAEVR (69 aa)).

Belongs to the universal ribosomal protein uS3 family. As to quaternary structure, part of the 30S ribosomal subunit. Forms a tight complex with proteins S10 and S14.

Its function is as follows. Binds the lower part of the 30S subunit head. Binds mRNA in the 70S ribosome, positioning it for translation. The protein is Small ribosomal subunit protein uS3 of Aliivibrio fischeri (strain MJ11) (Vibrio fischeri).